The following is a 118-amino-acid chain: UPF0449 protein C19orf25 homolog (118 aa).

Y63 is subject to Phosphotyrosine. Positions 69–105 form a coiled coil; that stretch reads YVAMNQRLQQAGAQLEQKRADLQQAGEELERDISQVG.

The protein belongs to the UPF0449 family.

The polypeptide is UPF0449 protein C19orf25 homolog (Bos taurus (Bovine)).